Reading from the N-terminus, the 446-residue chain is Exodeoxyribonuclease 7 large subunit (446 aa).

It belongs to the XseA family. As to quaternary structure, heterooligomer composed of large and small subunits.

It is found in the cytoplasm. It catalyses the reaction Exonucleolytic cleavage in either 5'- to 3'- or 3'- to 5'-direction to yield nucleoside 5'-phosphates.. Its function is as follows. Bidirectionally degrades single-stranded DNA into large acid-insoluble oligonucleotides, which are then degraded further into small acid-soluble oligonucleotides. The protein is Exodeoxyribonuclease 7 large subunit of Xanthomonas campestris pv. campestris (strain 8004).